Reading from the N-terminus, the 401-residue chain is Tyrosine--tRNA ligase (401 aa).

The 'HIGH' region signature appears at 45 to 54 (PTAPDLHLGH). Positions 230–234 (KMSKS) match the 'KMSKS' region motif. Lys233 is a binding site for ATP. The S4 RNA-binding domain maps to 339-399 (IWLAKALVEC…GKRKFAKLKV (61 aa)).

This sequence belongs to the class-I aminoacyl-tRNA synthetase family. TyrS type 2 subfamily. As to quaternary structure, homodimer.

The protein resides in the cytoplasm. The enzyme catalyses tRNA(Tyr) + L-tyrosine + ATP = L-tyrosyl-tRNA(Tyr) + AMP + diphosphate + H(+). Its function is as follows. Catalyzes the attachment of tyrosine to tRNA(Tyr) in a two-step reaction: tyrosine is first activated by ATP to form Tyr-AMP and then transferred to the acceptor end of tRNA(Tyr). This chain is Tyrosine--tRNA ligase, found in Campylobacter jejuni subsp. jejuni serotype O:2 (strain ATCC 700819 / NCTC 11168).